Here is a 447-residue protein sequence, read N- to C-terminus: GTPase Der (447 aa).

2 consecutive EngA-type G domains span residues lysine 4–glutamate 165 and leucine 180–asparagine 357. Residues glycine 10–serine 17, aspartate 57–leucine 61, asparagine 119–glutamate 122, glycine 186–serine 193, aspartate 233–leucine 237, and asparagine 298–aspartate 301 contribute to the GTP site. Residues lysine 358 to lysine 443 enclose the KH-like domain.

Belongs to the TRAFAC class TrmE-Era-EngA-EngB-Septin-like GTPase superfamily. EngA (Der) GTPase family. Associates with the 50S ribosomal subunit.

In terms of biological role, GTPase that plays an essential role in the late steps of ribosome biogenesis. The polypeptide is GTPase Der (Rickettsia prowazekii (strain Madrid E)).